A 639-amino-acid polypeptide reads, in one-letter code: Threonine--tRNA ligase (639 aa).

The 61-residue stretch at 1–61 folds into the TGS domain; the sequence is MIHITLPDGS…TQDSPLSIVT (61 aa). Positions 242 to 533 are catalytic; sequence DHRKLGRELD…LIEEHAGALP (292 aa). Positions 333, 384, and 510 each coordinate Zn(2+).

The protein belongs to the class-II aminoacyl-tRNA synthetase family. Homodimer. The cofactor is Zn(2+).

The protein localises to the cytoplasm. It catalyses the reaction tRNA(Thr) + L-threonine + ATP = L-threonyl-tRNA(Thr) + AMP + diphosphate + H(+). In terms of biological role, catalyzes the attachment of threonine to tRNA(Thr) in a two-step reaction: L-threonine is first activated by ATP to form Thr-AMP and then transferred to the acceptor end of tRNA(Thr). Also edits incorrectly charged L-seryl-tRNA(Thr). The polypeptide is Threonine--tRNA ligase (Acidovorax ebreus (strain TPSY) (Diaphorobacter sp. (strain TPSY))).